A 222-amino-acid chain; its full sequence is MADS-box transcription factor 26 (222 aa).

The 61-residue stretch at 1–61 folds into the MADS-box domain; it reads MARGKVQLRR…GKLYDLATTG (61 aa). In terms of domain architecture, K-box spans 85–176; that stretch reads RMDPKQEAMV…QEKIVEQNGL (92 aa).

The protein resides in the nucleus. Probable transcription factor. This chain is MADS-box transcription factor 26 (MADS26), found in Oryza sativa subsp. indica (Rice).